The chain runs to 747 residues: Cyclic di-GMP phosphodiesterase PdeF (747 aa).

Residues 1-14 (MKLNATYIKIRDKW) lie on the Periplasmic side of the membrane. The chain crosses the membrane as a helical span at residues 15–36 (WGLPLFLPSLILPIFAHINTFA). Topologically, residues 37–42 (HISSGE) are cytoplasmic. A helical membrane pass occupies residues 43–65 (VFLFYLPLALMISMMMFFSWAAL). Over 66 to 79 (PGIALGIFVRKYAE) the chain is Periplasmic. Residues 80–102 (LGFYETLSLTANFIIIIILCWGG) form a helical membrane-spanning segment. The Cytoplasmic portion of the chain corresponds to 103 to 128 (YRVFTPRRNNVSHGDTRLISQRIFWQ). Residues 129 to 151 (IVFPATLFLILFQFAAFVGLLAS) form a helical membrane-spanning segment. Residues 152-165 (RENLVGVMPFNLGT) are Periplasmic-facing. The helical transmembrane segment at 166 to 188 (LINYQALLVGNLIGVPLCYFIIR) threads the bilayer. Residues 189–215 (VVRNPFYLRSYYSQLKQQVDAKVTKKE) lie on the Cytoplasmic side of the membrane. Residues 216–235 (FALWLLALGALLLLLCMPLN) form a helical membrane-spanning segment. Over 236–239 (EKST) the chain is Periplasmic. Residues 240–259 (IFSTNYTLSLLLPLMMWGAM) traverse the membrane as a helical segment. The Cytoplasmic portion of the chain corresponds to 260-265 (RYGYKL). Residues 266-285 (ISLLWAVVLMISIHSYQNYI) traverse the membrane as a helical segment. The Periplasmic segment spans residues 286–294 (PIYPGYTTQ). A helical membrane pass occupies residues 295-317 (LTITSSSYLVFSFIVNYMAVLAT). Residues 318-747 (RQRAVVRRIQ…NEIEPIRESA (430 aa)) are Cytoplasmic-facing. Residues 493 to 744 (KVAMMNRLQQ…DTLNEIEPIR (252 aa)) form the EAL domain.

Mg(2+) serves as cofactor. Mn(2+) is required as a cofactor.

The protein localises to the cell inner membrane. It catalyses the reaction 3',3'-c-di-GMP + H2O = 5'-phosphoguanylyl(3'-&gt;5')guanosine + H(+). With respect to regulation, inhibited by pGpG. Functionally, phosphodiesterase (PDE) that catalyzes the hydrolysis of cyclic-di-GMP (c-di-GMP) to 5'-pGpG. Truncated proteins consisting of the GGDEF/EAL domains (residues 319-747) or of the EAL domain alone (481-747) have c-di-GMP phosphodiesterase activity. They do not have diguanylate cyclase activity. Cyclic-di-GMP is a second messenger which controls cell surface-associated traits in bacteria. This Escherichia coli (strain K12) protein is Cyclic di-GMP phosphodiesterase PdeF.